The chain runs to 194 residues: ATP-dependent Clp protease proteolytic subunit (194 aa).

The active-site Nucleophile is the S98. H123 is a catalytic residue.

The protein belongs to the peptidase S14 family. In terms of assembly, fourteen ClpP subunits assemble into 2 heptameric rings which stack back to back to give a disk-like structure with a central cavity, resembling the structure of eukaryotic proteasomes.

It localises to the cytoplasm. The catalysed reaction is Hydrolysis of proteins to small peptides in the presence of ATP and magnesium. alpha-casein is the usual test substrate. In the absence of ATP, only oligopeptides shorter than five residues are hydrolyzed (such as succinyl-Leu-Tyr-|-NHMec, and Leu-Tyr-Leu-|-Tyr-Trp, in which cleavage of the -Tyr-|-Leu- and -Tyr-|-Trp bonds also occurs).. Cleaves peptides in various proteins in a process that requires ATP hydrolysis. Has a chymotrypsin-like activity. Plays a major role in the degradation of misfolded proteins. The polypeptide is ATP-dependent Clp protease proteolytic subunit (Syntrophotalea carbinolica (strain DSM 2380 / NBRC 103641 / GraBd1) (Pelobacter carbinolicus)).